A 92-amino-acid polypeptide reads, in one-letter code: Large ribosomal subunit protein bL25 (92 aa).

It belongs to the bacterial ribosomal protein bL25 family. As to quaternary structure, part of the 50S ribosomal subunit; part of the 5S rRNA/L5/L18/L25 subcomplex. Contacts the 5S rRNA. Binds to the 5S rRNA independently of L5 and L18.

Its function is as follows. This is one of the proteins that binds to the 5S RNA in the ribosome where it forms part of the central protuberance. The protein is Large ribosomal subunit protein bL25 of Vibrio vulnificus (strain CMCP6).